A 764-amino-acid chain; its full sequence is Probable cyclic nucleotide-gated ion channel 20, chloroplastic (764 aa).

A chloroplast-targeting transit peptide spans 1-25; that stretch reads MASHNENDDIPMLPISDPSSRTRAR. The tract at residues 1–40 is disordered; that stretch reads MASHNENDDIPMLPISDPSSRTRARAFTSRSRSVSLSNPT. Over residues 19–33 the composition is skewed to low complexity; the sequence is SSRTRARAFTSRSRS. Residues 26 to 204 are Stromal-facing; that stretch reads AFTSRSRSVS…PHAKEVQTWT (179 aa). A helical transmembrane segment spans residues 205 to 225; it reads KFFALSCLLAIFIDPLFFFLI. The Lumenal portion of the chain corresponds to 226–242; sequence KVQEQNKCIMIDWPMTK. Residues 243–263 form a helical membrane-spanning segment; it reads AFVAVRSVTDVIFTMNILLQF. Topologically, residues 264-295 are stromal; the sequence is RLAYVARESTVVGAGQLVSHPKKIALHYLKGK. A helical transmembrane segment spans residues 296 to 316; sequence FFLDLFIVMPLPQILILWIIP. The Lumenal segment spans residues 317–329; the sequence is AHLGASGANYAKN. Residues 330-350 traverse the membrane as a helical segment; the sequence is LLRAAVLFQYIPKLYRLLPFL. Residues 351–366 lie on the Stromal side of the membrane; the sequence is AGQTPTGFIFESAWAN. Residues 367–387 traverse the membrane as a helical segment; that stretch reads FVINLLTFMLAGHVVGSCWYL. Residues 388-488 are Lumenal-facing; sequence FGLQRVNQCL…GNQVPSYFLG (101 aa). Residues 489 to 509 form a helical membrane-spanning segment; that stretch reads EVFFTMGIIGLGLLLFALLIG. Residues 510-764 lie on the Stromal side of the membrane; that stretch reads NMQNFLQALG…LCTPQSSYSL (255 aa). A nucleoside 3',5'-cyclic phosphate is bound by residues 593–710 and glutamate 658; that span reads IFSL…EDVT. Positions 713–729 are calmodulin-binding; sequence FSRFLRSHRVQGAIRYD. Residues 734-763 form the IQ domain; sequence RLRAARQIQVAWRYRRRRLHRLCTPQSSYS.

This sequence belongs to the cyclic nucleotide-gated cation channel (TC 1.A.1.5) family. In terms of assembly, homotetramer or heterotetramer.

The protein resides in the plastid. Its subcellular location is the chloroplast thylakoid membrane. Its function is as follows. Probable cyclic nucleotide-gated ion channel. In Arabidopsis thaliana (Mouse-ear cress), this protein is Probable cyclic nucleotide-gated ion channel 20, chloroplastic (CNGC20).